A 454-amino-acid chain; its full sequence is Bifunctional protein GlmU (454 aa).

A pyrophosphorylase region spans residues 1-232 (MTDRTCLSIV…VDNVIGINNR (232 aa)). Residues 11–14 (LAAG), Lys25, Gln78, and 83–84 (GT) contribute to the UDP-N-acetyl-alpha-D-glucosamine site. Asp108 provides a ligand contact to Mg(2+). Residues Gly144, Glu158, Asn173, and Asn230 each coordinate UDP-N-acetyl-alpha-D-glucosamine. Asn230 contacts Mg(2+). Positions 233–253 (AELAEAETIWQNRKRRELMLS) are linker. The N-acetyltransferase stretch occupies residues 254–454 (GVTLIAPETV…AIKAAKSVSK (201 aa)). UDP-N-acetyl-alpha-D-glucosamine is bound by residues Arg319 and Lys337. The active-site Proton acceptor is His349. Residues Tyr352 and Asn363 each coordinate UDP-N-acetyl-alpha-D-glucosamine. Acetyl-CoA contacts are provided by residues Ala366, 372-373 (NY), Ser391, Ser409, and Arg426.

The protein in the N-terminal section; belongs to the N-acetylglucosamine-1-phosphate uridyltransferase family. It in the C-terminal section; belongs to the transferase hexapeptide repeat family. Homotrimer. Mg(2+) serves as cofactor.

The protein resides in the cytoplasm. It carries out the reaction alpha-D-glucosamine 1-phosphate + acetyl-CoA = N-acetyl-alpha-D-glucosamine 1-phosphate + CoA + H(+). The catalysed reaction is N-acetyl-alpha-D-glucosamine 1-phosphate + UTP + H(+) = UDP-N-acetyl-alpha-D-glucosamine + diphosphate. The protein operates within nucleotide-sugar biosynthesis; UDP-N-acetyl-alpha-D-glucosamine biosynthesis; N-acetyl-alpha-D-glucosamine 1-phosphate from alpha-D-glucosamine 6-phosphate (route II): step 2/2. Its pathway is nucleotide-sugar biosynthesis; UDP-N-acetyl-alpha-D-glucosamine biosynthesis; UDP-N-acetyl-alpha-D-glucosamine from N-acetyl-alpha-D-glucosamine 1-phosphate: step 1/1. It functions in the pathway bacterial outer membrane biogenesis; LPS lipid A biosynthesis. Catalyzes the last two sequential reactions in the de novo biosynthetic pathway for UDP-N-acetylglucosamine (UDP-GlcNAc). The C-terminal domain catalyzes the transfer of acetyl group from acetyl coenzyme A to glucosamine-1-phosphate (GlcN-1-P) to produce N-acetylglucosamine-1-phosphate (GlcNAc-1-P), which is converted into UDP-GlcNAc by the transfer of uridine 5-monophosphate (from uridine 5-triphosphate), a reaction catalyzed by the N-terminal domain. The protein is Bifunctional protein GlmU of Brucella canis (strain ATCC 23365 / NCTC 10854 / RM-666).